We begin with the raw amino-acid sequence, 146 residues long: Large ribosomal subunit protein uL15 (146 aa).

The interval Met-1–Gln-54 is disordered.

The protein belongs to the universal ribosomal protein uL15 family. In terms of assembly, part of the 50S ribosomal subunit.

Binds to the 23S rRNA. This chain is Large ribosomal subunit protein uL15, found in Lachnoclostridium phytofermentans (strain ATCC 700394 / DSM 18823 / ISDg) (Clostridium phytofermentans).